Here is a 138-residue protein sequence, read N- to C-terminus: Putative pre-16S rRNA nuclease (138 aa).

This sequence belongs to the YqgF nuclease family.

It is found in the cytoplasm. In terms of biological role, could be a nuclease involved in processing of the 5'-end of pre-16S rRNA. The polypeptide is Putative pre-16S rRNA nuclease (Escherichia coli O45:K1 (strain S88 / ExPEC)).